The following is a 116-amino-acid chain: Small ribosomal subunit protein uS13 (116 aa).

The disordered stretch occupies residues R92–R116. The span at A106–R116 shows a compositional bias: basic residues.

The protein belongs to the universal ribosomal protein uS13 family. As to quaternary structure, part of the 30S ribosomal subunit. Forms a loose heterodimer with protein S19. Forms two bridges to the 50S subunit in the 70S ribosome.

Its function is as follows. Located at the top of the head of the 30S subunit, it contacts several helices of the 16S rRNA. In the 70S ribosome it contacts the 23S rRNA (bridge B1a) and protein L5 of the 50S subunit (bridge B1b), connecting the 2 subunits; these bridges are implicated in subunit movement. Contacts the tRNAs in the A and P-sites. In Lactobacillus acidophilus (strain ATCC 700396 / NCK56 / N2 / NCFM), this protein is Small ribosomal subunit protein uS13.